A 472-amino-acid chain; its full sequence is DEAD-box ATP-dependent RNA helicase 58, chloroplastic (472 aa).

Residues 1 to 54 (MASQLLNVPHLAFFPKISYASVFSTLKPSFFHSTSTRRALKSSPSSRIINLQAV) constitute a chloroplast transit peptide. The Q motif motif lies at 76–104 (RQICQGFVPEHILHRMEEIGFVFPTDIQR). The Helicase ATP-binding domain maps to 107–286 (LPTLFTGRDC…DCIQQKWTKR (180 aa)). 120–127 (AQTGSGKT) is a binding site for ATP. Positions 231-234 (DEVD) match the DEAD box motif. A Helicase C-terminal domain is found at 314–472 (NKHQVLLALL…LMFSCEEMML (159 aa)).

This sequence belongs to the DEAD box helicase family.

It localises to the plastid. The protein localises to the chloroplast. The enzyme catalyses ATP + H2O = ADP + phosphate + H(+). This Arabidopsis thaliana (Mouse-ear cress) protein is DEAD-box ATP-dependent RNA helicase 58, chloroplastic (RH58).